Here is a 1439-residue protein sequence, read N- to C-terminus: Probable histone acetyltransferase HAC-like 2 (1439 aa).

2 disordered regions span residues 1 to 43 (MKQG…ASAD) and 313 to 335 (YGISPNKPLQRHVNPSTRSTPTP). Positions 325–335 (VNPSTRSTPTP) are enriched in polar residues. Residues 607-687 (ENTKQYHAQA…NEHCHVCCKA (81 aa)) form a TAZ-type zinc finger. The PHD-type; degenerate zinc finger occupies 827-933 (KIHCHVQQET…EYTCFKCYIE (107 aa)). A CBP/p300-type HAT domain is found at 948-1383 (VRGAKDLPRT…MLYHLHNPTG (436 aa)). A coiled-coil region spans residues 964–989 (EERLFKRLREERQERANKLKTSLDEV). Residues 1071–1073 (LDS), 1090–1091 (RT), and W1146 each bind acetyl-CoA. Residues 1265–1328 (HLQYSCSHCC…ILHPVEIVGV (64 aa)) form a ZZ-type zinc finger. 8 residues coordinate Zn(2+): C1270, C1273, C1285, C1288, C1294, C1297, H1310, and H1318.

Its subcellular location is the nucleus. The catalysed reaction is L-lysyl-[protein] + acetyl-CoA = N(6)-acetyl-L-lysyl-[protein] + CoA + H(+). Functionally, acetyltransferase enzyme. Acetylates histones, giving a specific tag for transcriptional activation. This is Probable histone acetyltransferase HAC-like 2 from Oryza sativa subsp. japonica (Rice).